The sequence spans 364 residues: Chorismate synthase (364 aa).

Arg48 and Arg54 together coordinate NADP(+). FMN-binding positions include Arg129 to Ser131, Asn243 to Ala244, Gly288, Lys303 to Ser307, and Arg329.

This sequence belongs to the chorismate synthase family. Homotetramer. FMNH2 serves as cofactor.

The enzyme catalyses 5-O-(1-carboxyvinyl)-3-phosphoshikimate = chorismate + phosphate. The protein operates within metabolic intermediate biosynthesis; chorismate biosynthesis; chorismate from D-erythrose 4-phosphate and phosphoenolpyruvate: step 7/7. Functionally, catalyzes the anti-1,4-elimination of the C-3 phosphate and the C-6 proR hydrogen from 5-enolpyruvylshikimate-3-phosphate (EPSP) to yield chorismate, which is the branch point compound that serves as the starting substrate for the three terminal pathways of aromatic amino acid biosynthesis. This reaction introduces a second double bond into the aromatic ring system. The chain is Chorismate synthase from Chelativorans sp. (strain BNC1).